Here is a 256-residue protein sequence, read N- to C-terminus: Small ribosomal subunit protein eS1 (256 aa).

Residues 1–18 are compositionally biased toward basic residues; sequence MAVGKNKRLSKGKKGLKK. A disordered region spans residues 1–20; the sequence is MAVGKNKRLSKGKKGLKKRT. Residue Ala-2 is modified to N-acetylalanine; partial.

Belongs to the eukaryotic ribosomal protein eS1 family. Component of the small ribosomal subunit. Mature ribosomes consist of a small (40S) and a large (60S) subunit. The 40S subunit contains about 33 different proteins and 1 molecule of RNA (18S). The 60S subunit contains about 49 different proteins and 3 molecules of RNA (25S, 5.8S and 5S).

It is found in the cytoplasm. This is Small ribosomal subunit protein eS1 (rps1) from Talaromyces stipitatus (strain ATCC 10500 / CBS 375.48 / QM 6759 / NRRL 1006) (Penicillium stipitatum).